The sequence spans 307 residues: Probable protein S-acyltransferase 14 (307 aa).

A run of 2 helical transmembrane segments spans residues 22-42 (LGSI…YAVV) and 63-83 (ILIL…SVVF). The region spanning 127–177 (RFCRKCNQLKPSRCHHCSVCGRCVLKMDHHCVWVVNCVGALNYKYFLLFLF) is the DHHC domain. Cysteine 157 serves as the catalytic S-palmitoyl cysteine intermediate. The next 2 helical transmembrane spans lie at 171–191 (YFLL…LVLM) and 213–233 (TFLA…FLIM).

It belongs to the DHHC palmitoyltransferase family.

It is found in the golgi apparatus. Its subcellular location is the trans-Golgi network membrane. It catalyses the reaction L-cysteinyl-[protein] + hexadecanoyl-CoA = S-hexadecanoyl-L-cysteinyl-[protein] + CoA. In terms of biological role, palmitoyl acyltransferase. The polypeptide is Probable protein S-acyltransferase 14 (PAT14) (Arabidopsis thaliana (Mouse-ear cress)).